The primary structure comprises 176 residues: MQVDVHIQWDLEDRAIPSSLVENVLKQAHQITAVTWQSWFQHWFEHLQPSISPIQTYELSLLLTDDAAIQNLNATYRHLDRPTDVLAFATLDLTEQPTDLWSEMPVELGDIIISVETAAQQAQEQQHPLPQELAWLATHGLLHLLGWDHPTPERLQDMLAQQQLLINLTNVSAATS.

Zn(2+)-binding residues include H139, H143, and H149.

It belongs to the endoribonuclease YbeY family. The cofactor is Zn(2+).

It localises to the cytoplasm. In terms of biological role, single strand-specific metallo-endoribonuclease involved in late-stage 70S ribosome quality control and in maturation of the 3' terminus of the 16S rRNA. The protein is Endoribonuclease YbeY of Acaryochloris marina (strain MBIC 11017).